Reading from the N-terminus, the 704-residue chain is SH3KBP1-binding protein 1 (704 aa).

A2 carries the N-acetylalanine modification. One can recognise a BTB domain in the interval 19 to 88 (EVIHLNVGGK…LRTKELDPRG (70 aa)). The segment at 146-165 (VGPQQIGGRPAPVRRSNTMP) is disordered. The residue at position 163 (T163) is a Phosphothreonine. WD repeat units follow at residues 233–280 (RLDW…GGSE), 283–322 (VFHL…WQVQ), 324–359 (VQPI…LRMK), 428–466 (VHRS…GMIS), and 548–586 (LECE…DGLG). Residues 609 to 704 (PLTSSRASFP…PKNTLNETSF (96 aa)) are disordered. Positions 611-631 (TSSRASFPSPSPRTSLTSLHS) are enriched in low complexity. Residues 618-623 (PSPSPR) carry the PXXXPR motif. S644 and S646 each carry phosphoserine. Positions 678 to 683 (PTPAPR) match the PXXXPR motif.

The protein belongs to the KCTD3 family. Monomer. Interacts with CUL3; interaction is direct and forms a 5:5 heterodecamer. Interacts (via PXXXPR motifs) with SH3KBP1 (via SH3 domains). Directly interacts with cathepsin B/CTSB.

The protein resides in the lysosome. Functionally, inhibits CBL-SH3KBP1 complex mediated down-regulation of EGFR signaling by sequestration of SH3KBP1. Binds to SH3KBP1 and prevents its interaction with CBL and inhibits translocation of SH3KBP1 to EGFR containing vesicles upon EGF stimulation. In Rattus norvegicus (Rat), this protein is SH3KBP1-binding protein 1 (Shkbp1).